Consider the following 246-residue polypeptide: Biosynthetic peptidoglycan transglycosylase (246 aa).

The chain crosses the membrane as a helical span at residues 27 to 47 (VVFCFFFAVFALLLIFRFVPI).

This sequence belongs to the glycosyltransferase 51 family.

It is found in the cell inner membrane. The catalysed reaction is [GlcNAc-(1-&gt;4)-Mur2Ac(oyl-L-Ala-gamma-D-Glu-L-Lys-D-Ala-D-Ala)](n)-di-trans,octa-cis-undecaprenyl diphosphate + beta-D-GlcNAc-(1-&gt;4)-Mur2Ac(oyl-L-Ala-gamma-D-Glu-L-Lys-D-Ala-D-Ala)-di-trans,octa-cis-undecaprenyl diphosphate = [GlcNAc-(1-&gt;4)-Mur2Ac(oyl-L-Ala-gamma-D-Glu-L-Lys-D-Ala-D-Ala)](n+1)-di-trans,octa-cis-undecaprenyl diphosphate + di-trans,octa-cis-undecaprenyl diphosphate + H(+). It functions in the pathway cell wall biogenesis; peptidoglycan biosynthesis. Peptidoglycan polymerase that catalyzes glycan chain elongation from lipid-linked precursors. In Haemophilus influenzae (strain ATCC 51907 / DSM 11121 / KW20 / Rd), this protein is Biosynthetic peptidoglycan transglycosylase.